Reading from the N-terminus, the 995-residue chain is Aconitate hydratase 2, mitochondrial (995 aa).

Residues 1 to 83 (MYRRATSGVR…PASLRAQARN (83 aa)) constitute a mitochondrion transit peptide. Substrate-binding positions include Gln187 and 306–308 (DSH). Positions 538, 604, and 607 each coordinate [4Fe-4S] cluster. Substrate-binding positions include Arg637, Arg642, Arg800, and 881-882 (SR).

The protein belongs to the aconitase/IPM isomerase family. As to quaternary structure, monomer. It depends on [4Fe-4S] cluster as a cofactor. As to expression, mostly expressed in roots, leaves and flowers, also present in stems, and, at low levels, in seeds.

It is found in the mitochondrion. It carries out the reaction citrate = D-threo-isocitrate. It functions in the pathway carbohydrate metabolism; tricarboxylic acid cycle; isocitrate from oxaloacetate: step 2/2. Its function is as follows. Catalyzes the isomerization of citrate to isocitrate via cis-aconitate. Contributes to oxidative stress tolerance. Involved in acetate assimilation. The sequence is that of Aconitate hydratase 2, mitochondrial from Arabidopsis thaliana (Mouse-ear cress).